The chain runs to 197 residues: MGLSSTDKKDRRNMLFAAIPSICASSPKKISIYNEEMIVARCFIGFLIFSRKSLGKTFKETLDGRIESIQEELQQFFNPKQVIPGESNEQQRLLRISLRICSAVVESLPTAACAPKCEKTVQALLCRNLNVKSATLLNATSSRRIRLQDDIVTGFHFSVSERFVSGSTFKASTVEQIREAFVPIDLIREGLIVLRKV.

Residues 30–50 traverse the membrane as a helical segment; that stretch reads ISIYNEEMIVARCFIGFLIFS.

It belongs to the ATPase protein MI25 family. As to quaternary structure, F-type ATPases have 2 components, CF(1) - the catalytic core - and CF(0) - the membrane proton channel. CF(1) has five subunits: alpha(3), beta(3), gamma(1), delta(1), epsilon(1). CF(0) has three main subunits: a, b and c.

The protein resides in the mitochondrion membrane. Its function is as follows. This is one of the chains of the nonenzymatic component (CF(0) subunit) of the mitochondrial ATPase complex. The polypeptide is ATP synthase protein MI25 (Oryza sativa subsp. indica (Rice)).